A 165-amino-acid polypeptide reads, in one-letter code: Large ribosomal subunit protein uL11A (165 aa).

P2 is subject to N,N-dimethylproline; by NTM1. Residues K4 and K11 each carry the N6,N6,N6-trimethyllysine; by RKM2 modification. Phosphoserine is present on residues S25 and S38. R67 is modified (N5-methylarginine; by RMT2). Glycyl lysine isopeptide (Lys-Gly) (interchain with G-Cter in ubiquitin) cross-links involve residues K130 and K146.

The protein belongs to the universal ribosomal protein uL11 family. In terms of assembly, component of the large ribosomal subunit (LSU). Mature yeast ribosomes consist of a small (40S) and a large (60S) subunit. The 40S small subunit contains 1 molecule of ribosomal RNA (18S rRNA) and 33 different proteins (encoded by 57 genes). The large 60S subunit contains 3 rRNA molecules (25S, 5.8S and 5S rRNA) and 46 different proteins (encoded by 81 genes). Post-translationally, it appears that the main modified species for L12 contains 6 methyl groups, 2 on Pro-2, 3 on Lys-4 and 1 on Arg-67. Although not reproduced with a second method, methylation at Lys-11 cannot be ruled out.

It localises to the cytoplasm. In terms of biological role, component of the ribosome, a large ribonucleoprotein complex responsible for the synthesis of proteins in the cell. The small ribosomal subunit (SSU) binds messenger RNAs (mRNAs) and translates the encoded message by selecting cognate aminoacyl-transfer RNA (tRNA) molecules. The large subunit (LSU) contains the ribosomal catalytic site termed the peptidyl transferase center (PTC), which catalyzes the formation of peptide bonds, thereby polymerizing the amino acids delivered by tRNAs into a polypeptide chain. The nascent polypeptides leave the ribosome through a tunnel in the LSU and interact with protein factors that function in enzymatic processing, targeting, and the membrane insertion of nascent chains at the exit of the ribosomal tunnel. This chain is Large ribosomal subunit protein uL11A, found in Saccharomyces cerevisiae (strain ATCC 204508 / S288c) (Baker's yeast).